The following is a 97-amino-acid chain: Citrate lyase acyl carrier protein (97 aa).

An O-(phosphoribosyl dephospho-coenzyme A)serine modification is found at Ser14.

Belongs to the CitD family. As to quaternary structure, oligomer with a subunit composition of (alpha,beta,gamma)6.

The protein localises to the cytoplasm. In terms of biological role, covalent carrier of the coenzyme of citrate lyase. The sequence is that of Citrate lyase acyl carrier protein from Klebsiella pneumoniae subsp. pneumoniae (strain ATCC 700721 / MGH 78578).